Here is a 545-residue protein sequence, read N- to C-terminus: B3 domain-containing protein Os03g0620500 (545 aa).

Positions 26-119 (MKCFHRQMSA…RRASGVQERN (94 aa)) form a DNA-binding region, TF-B3 1. The interval 111-188 (RASGVQERNA…SSSEHESSYD (78 aa)) is disordered. Positions 173-186 (EEAKESSSSEHESS) are enriched in basic and acidic residues. A DNA-binding region (TF-B3 2) is located at residues 231 to 331 (VTTMKHSNVN…RATVHLLRET (101 aa)). Residues 368–400 (RRGTMEPSTTNVKKEADNEQCNNGQGKRQEPLN) are disordered. A DNA-binding region (TF-B3 3) is located at residues 441 to 542 (YVSIMNKSNV…AMKVHIIRHN (102 aa)).

Its subcellular location is the nucleus. The polypeptide is B3 domain-containing protein Os03g0620500 (Oryza sativa subsp. japonica (Rice)).